We begin with the raw amino-acid sequence, 41 residues long: Cytochrome b559 subunit beta (41 aa).

A helical transmembrane segment spans residues 16 to 32 (WLAVHALAVPTVFFLGS). Residue His-20 participates in heme binding.

Belongs to the PsbE/PsbF family. In terms of assembly, heterodimer of an alpha subunit and a beta subunit. PSII is composed of 1 copy each of membrane proteins PsbA, PsbB, PsbC, PsbD, PsbE, PsbF, PsbH, PsbI, PsbJ, PsbK, PsbL, PsbM, PsbT, PsbX, PsbY, PsbZ, Psb30/Ycf12, at least 3 peripheral proteins of the oxygen-evolving complex and a large number of cofactors. It forms dimeric complexes. It depends on heme b as a cofactor.

The protein resides in the plastid. Its subcellular location is the chloroplast thylakoid membrane. Its function is as follows. This b-type cytochrome is tightly associated with the reaction center of photosystem II (PSII). PSII is a light-driven water:plastoquinone oxidoreductase that uses light energy to abstract electrons from H(2)O, generating O(2) and a proton gradient subsequently used for ATP formation. It consists of a core antenna complex that captures photons, and an electron transfer chain that converts photonic excitation into a charge separation. In Nephroselmis olivacea (Green alga), this protein is Cytochrome b559 subunit beta.